The chain runs to 97 residues: Large ribosomal subunit protein uL23 (97 aa).

It belongs to the universal ribosomal protein uL23 family. As to quaternary structure, part of the 50S ribosomal subunit. Contacts protein L29, and trigger factor when it is bound to the ribosome.

Its function is as follows. One of the early assembly proteins it binds 23S rRNA. One of the proteins that surrounds the polypeptide exit tunnel on the outside of the ribosome. Forms the main docking site for trigger factor binding to the ribosome. This is Large ribosomal subunit protein uL23 from Mesorhizobium japonicum (strain LMG 29417 / CECT 9101 / MAFF 303099) (Mesorhizobium loti (strain MAFF 303099)).